The sequence spans 953 residues: GATA zinc finger domain-containing protein 14 (953 aa).

The span at 1–21 (MFEKIPNQNSHSMGDNNTGYY) shows a compositional bias: polar residues. Disordered stretches follow at residues 1–109 (MFEK…SPNR) and 216–756 (TYGS…TQPQ). Over residues 22 to 89 (NNNNNNNNNN…QLPSPQLSQP (68 aa)) the composition is skewed to low complexity. Over residues 90–109 (NSMNTTPNQTSPNLRSSPNR) the composition is skewed to polar residues. 3 stretches are compositionally biased toward low complexity: residues 219–330 (SSNT…VNAN), 342–683 (NIYN…PNSS), and 690–756 (GNNG…TQPQ). The GATA-type zinc-finger motif lies at 893 to 918 (CTSCGTTQTPEWRKGPAGGKSLCNAC). The segment at 934–953 (KVETTSSPPSTSMNVVNLLN) is disordered.

This Dictyostelium discoideum (Social amoeba) protein is GATA zinc finger domain-containing protein 14 (gtaN).